Reading from the N-terminus, the 347-residue chain is Leucine-rich repeat-containing protein 69 (347 aa).

LRR repeat units follow at residues Asn-15 to Pro-37, Asn-38 to Thr-60, Gln-61 to Leu-82, Ser-84 to Gly-105, Arg-108 to Leu-129, Ser-131 to Leu-152, His-154 to Leu-175, Asn-177 to Leu-198, and Lys-200 to Arg-222.

The protein belongs to the LRRC69 family.

The polypeptide is Leucine-rich repeat-containing protein 69 (Lrrc69) (Mus musculus (Mouse)).